A 206-amino-acid chain; its full sequence is Large ribosomal subunit protein uL4 (206 aa).

The disordered stretch occupies residues 45–76 (RQGTQSAKTRTEVSGGGIKPWRQKGTGRARQG).

Belongs to the universal ribosomal protein uL4 family. In terms of assembly, part of the 50S ribosomal subunit.

One of the primary rRNA binding proteins, this protein initially binds near the 5'-end of the 23S rRNA. It is important during the early stages of 50S assembly. It makes multiple contacts with different domains of the 23S rRNA in the assembled 50S subunit and ribosome. Its function is as follows. Forms part of the polypeptide exit tunnel. This is Large ribosomal subunit protein uL4 from Clostridium acetobutylicum (strain ATCC 824 / DSM 792 / JCM 1419 / IAM 19013 / LMG 5710 / NBRC 13948 / NRRL B-527 / VKM B-1787 / 2291 / W).